A 265-amino-acid chain; its full sequence is DNA repair protein RecO (265 aa).

This sequence belongs to the RecO family.

Functionally, involved in DNA repair and RecF pathway recombination. The protein is DNA repair protein RecO of Mycobacterium ulcerans (strain Agy99).